Consider the following 92-residue polypeptide: Small ribosomal subunit protein uS19 (92 aa).

It belongs to the universal ribosomal protein uS19 family.

Its function is as follows. Protein S19 forms a complex with S13 that binds strongly to the 16S ribosomal RNA. The polypeptide is Small ribosomal subunit protein uS19 (Bartonella quintana (strain Toulouse) (Rochalimaea quintana)).